The sequence spans 492 residues: uncharacterized protein (492 aa).

The signal sequence occupies residues 1 to 22 (MIRPNMFALLMLVVLAITSVNA). N-linked (GlcNAc...) asparagine; by host glycosylation is found at Asn-92, Asn-97, Asn-119, Asn-146, Asn-213, Asn-267, and Asn-458.

It is found in the secreted. This is an uncharacterized protein from Acanthamoeba polyphaga (Amoeba).